Reading from the N-terminus, the 53-residue chain is VAHDRKFKNVQPKDXXKVPAIAVANPKEEVIVKNKDEKMADLRNVPKXDVIXK.

Mainly expressed in the fetal brain where it is specifically localized to the proximal axonal segments, cell bodies and growth cones. Lower level of expression was also detected in the fetal heart and the skeletal muscle. No expression in kidney, liver, lung or spleen.

Its subcellular location is the membrane. Its function is as follows. Neuronal antigen that may play a role in brain development. May be involved in neurite formation or axonal guidance. The sequence is that of Neuronal protein NP-190 from Sus scrofa (Pig).